We begin with the raw amino-acid sequence, 345 residues long: tRNA-dihydrouridine(20/20a) synthase (345 aa).

Residues 32 to 34 and Gln-84 contribute to the FMN site; that span reads PML. The Proton donor role is filled by Cys-114. Residues Lys-153, His-186, 226-228, and 248-249 each bind FMN; these read NGG and GR.

It belongs to the Dus family. DusA subfamily. The cofactor is FMN.

The catalysed reaction is 5,6-dihydrouridine(20) in tRNA + NADP(+) = uridine(20) in tRNA + NADPH + H(+). It carries out the reaction 5,6-dihydrouridine(20) in tRNA + NAD(+) = uridine(20) in tRNA + NADH + H(+). The enzyme catalyses 5,6-dihydrouridine(20a) in tRNA + NADP(+) = uridine(20a) in tRNA + NADPH + H(+). It catalyses the reaction 5,6-dihydrouridine(20a) in tRNA + NAD(+) = uridine(20a) in tRNA + NADH + H(+). In terms of biological role, catalyzes the synthesis of 5,6-dihydrouridine (D), a modified base found in the D-loop of most tRNAs, via the reduction of the C5-C6 double bond in target uridines. Specifically modifies U20 and U20a in tRNAs. The polypeptide is tRNA-dihydrouridine(20/20a) synthase (Escherichia coli O157:H7).